The following is a 134-amino-acid chain: Replication enhancer protein (134 aa).

Belongs to the geminiviridae replication enhancer protein family. Homooligomer. Interacts with the replication-associated protein (REP). Interacts with host proliferating cell nuclear antigen (PCNA). Interacts with host retinoblastoma-related protein 1 (RBR1), and may thereby deregulate the host cell cycle. Oligomerization and interaction with PCNA are necessary for optimal replication enhancement.

Increases viral DNA accumulation. Enhances infectivity and symptom expression. The protein is Replication enhancer protein of Solanum lycopersicum (Tomato).